A 41-amino-acid chain; its full sequence is Plantazolicin (41 aa).

The propeptide occupies 1-27; that stretch reads MTKITIPTALSAKVHGEGQHLFEPMAA. An N2,N2-dimethylarginine; in form plantazolicin A modification is found at arginine 28. Positions 28–29 form a cross-link, thiazole-4-carboxylic acid (Arg-Cys); that stretch reads RC. Cross-links (5-methyloxazole-4-carboxylic acid (Cys-Thr)) lie at residues 29–30 and 31–32; these read CT. A cross-link (thiazole-4-carboxylic acid (Thr-Cys)) is located at residues 30–31; the sequence is TC. Residues 32–33 constitute a cross-link (5-methyloxazole-4-carboxylic acid (Thr-Thr)); that stretch reads TT. Residues 35-36 constitute a cross-link (oxazole-4-carboxylic acid (Ile-Ser)); the sequence is IS. 3 consecutive cross-links (oxazole-4-carboxylic acid (Ser-Ser)) follow at residues 36 to 37, 37 to 38, and 38 to 39; these read SS. Positions 39 to 40 form a cross-link, 5-methyloxazoline-4-carboxylic acid (Ser-Thr); sequence ST.

In terms of processing, maturation of thiazole and oxazole containing antibiotics involves the enzymatic condensation of a Cys, Ser or Thr with the alpha-carbonyl of the preceding amino acid to form a thioether or ether bond, then dehydration to form a double bond with the alpha-amino nitrogen. Thiazoline or oxazoline ring are dehydrogenated to form thiazole or oxazole rings.

The protein resides in the secreted. Its subcellular location is the cell wall. Its function is as follows. Peptide antibiotic inhibiting growth of Gram-positive bacteria. The mode of action appears to be disruption of cell walls and lysis of cells. The polypeptide is Plantazolicin (Bacillus pumilus (strain ATCC 7061 / DSM 27 / CCUG 26015 / JCM 2508 / NBRC 12092 / NCIMB 9369 / NCTC 10337 / NRRL NRS-272 / CCM 2144)).